The primary structure comprises 337 residues: Glyceraldehyde-3-phosphate dehydrogenase (337 aa).

Residues 12-13, aspartate 34, and arginine 79 contribute to the NAD(+) site; that span reads RI. Residues 150–152, threonine 181, 210–211, and arginine 233 contribute to the D-glyceraldehyde 3-phosphate site; these read SCT and TG. Cysteine 151 acts as the Nucleophile in catalysis. Asparagine 315 contributes to the NAD(+) binding site.

Belongs to the glyceraldehyde-3-phosphate dehydrogenase family. In terms of assembly, homotetramer.

It localises to the cytoplasm. It carries out the reaction D-glyceraldehyde 3-phosphate + phosphate + NAD(+) = (2R)-3-phospho-glyceroyl phosphate + NADH + H(+). It participates in carbohydrate degradation; glycolysis; pyruvate from D-glyceraldehyde 3-phosphate: step 1/5. This Cryphonectria parasitica (Chestnut blight fungus) protein is Glyceraldehyde-3-phosphate dehydrogenase.